We begin with the raw amino-acid sequence, 190 residues long: Glycine cleavage system transcriptional repressor (190 aa).

ACT domains are found at residues 10–91 (VITA…PRPP) and 97–176 (WVQV…GSIN).

The protein resides in the cytoplasm. In terms of biological role, negative transcriptional regulator of the glycine cleavage system operon (GCV). Does not autoregulate its own expression. It is not yet known how GcvR acts as a repressor. It does not seem to bind DNA. It could interact with GcvA and suppress its activatory activity. This chain is Glycine cleavage system transcriptional repressor (gcvR), found in Escherichia coli (strain K12).